Consider the following 158-residue polypeptide: Transcription elongation factor GreB (158 aa).

Residues 53-75 are a coiled coil; sequence KRRLREIDRRVRFLTKRLEVLQI.

The protein belongs to the GreA/GreB family. GreB subfamily.

Functionally, necessary for efficient RNA polymerase transcription elongation past template-encoded arresting sites. The arresting sites in DNA have the property of trapping a certain fraction of elongating RNA polymerases that pass through, resulting in locked ternary complexes. Cleavage of the nascent transcript by cleavage factors such as GreA or GreB allows the resumption of elongation from the new 3'terminus. GreB releases sequences of up to 9 nucleotides in length. The protein is Transcription elongation factor GreB of Pasteurella multocida (strain Pm70).